The sequence spans 152 residues: Protein-export protein SecB (152 aa).

The protein belongs to the SecB family. In terms of assembly, homotetramer, a dimer of dimers. One homotetramer interacts with 1 SecA dimer.

Its subcellular location is the cytoplasm. In terms of biological role, one of the proteins required for the normal export of preproteins out of the cell cytoplasm. It is a molecular chaperone that binds to a subset of precursor proteins, maintaining them in a translocation-competent state. It also specifically binds to its receptor SecA. The chain is Protein-export protein SecB from Rickettsia akari (strain Hartford).